Consider the following 389-residue polypeptide: GTPase Obg (389 aa).

The Obg domain occupies 1-159; it reads MKFVDEAKIL…REVLLELMLL (159 aa). Residues 160–333 form the OBG-type G domain; the sequence is ADVGMLGMPN…LCWDIMEFLK (174 aa). GTP-binding positions include 166–173, 191–195, 213–216, 283–286, and 314–316; these read GMPNAGKS, FTTLV, DIPG, NKVD, and AAI. Mg(2+) is bound by residues Ser-173 and Thr-193. The disordered stretch occupies residues 362–389; sequence QLENPDLEDDDEDWDEEDDDGVEFIYQR. A compositionally biased stretch (acidic residues) spans 364-383; the sequence is ENPDLEDDDEDWDEEDDDGV.

Belongs to the TRAFAC class OBG-HflX-like GTPase superfamily. OBG GTPase family. Monomer. Mg(2+) is required as a cofactor.

Its subcellular location is the cytoplasm. Its function is as follows. An essential GTPase which binds GTP, GDP and possibly (p)ppGpp with moderate affinity, with high nucleotide exchange rates and a fairly low GTP hydrolysis rate. Plays a role in control of the cell cycle, stress response, ribosome biogenesis and in those bacteria that undergo differentiation, in morphogenesis control. This chain is GTPase Obg, found in Proteus mirabilis (strain HI4320).